We begin with the raw amino-acid sequence, 1043 residues long: MAASFPPTLGLSSAPDEIQHPHIKFSEWKFKLFRVRSFEKTPEEAQKEKKDSFEGKPSLEQSPAVLDKADGQKPVPTQPLLKAHPKFSKKFHDNEKARGKAIHQANLRHLCRICGNSFRADEHNRRYPVHGPVDGKTLGLLRKKEKRATSWPDLIAKVFRIDVKADVDSIHPTEFCHNCWSIMHRKFSSAPCEVYFPRNVTMEWHPHTPSCDICNTARRGLKRKSLQPNLQLSKKLKTVLDQARQARQHKRRAQARISSKDVMKKIANCSKIHLSTKLLAVDFPEHFVKSISCQICEHILADPVETNCKHVFCRVCILRCLKVMGSYCPSCRYPCFPTDLESPVKSFLSVLNSLMVKCPAKECNEEVSLEKYNHHISSHKESKEIFVHINKGGRPRQHLLSLTRRAQKHRLRELKLQVKAFADKEEGGDVKSVCMTLFLLALRARNEHRQADELEAIMQGKGSGLQPAVCLAIRVNTFLSCSQYHKMYRTVKAITGRQIFQPLHALRNAEKVLLPGYHHFEWQPPLKNVSSSTDVGIIDGLSGLSSSVDDYPVDTIAKRFRYDSALVSALMDMEEDILEGMRSQDLDDYLNGPFTVVVKESCDGMGDVSEKHGSGPVVPEKAVRFSFTIMKITIAHSSQNVKVFEEAKPNSELCCKPLCLMLADESDHETLTAILSPLIAEREAMKSSELMLELGGILRTFKFIFRGTGYDEKLVREVEGLEASGSVYICTLCDATRLEASQNLVFHSITRSHAENLERYEVWRSNPYHESVEELRDRVKGVSAKPFIETVPSIDALHCDIGNAAEFYKIFQLEIGEVYKNPNASKEERKRWQATLDKHLRKKMNLKPIMRMNGNFARKLMTKETVDAVCELIPSEERHEALRELMDLYLKMKPVWRSSCPAKECPESLCQYSFNSQRFAELLSTKFKYRYEGKITNYFHKTLAHVPEIIERDGSIGAWASEGNESGNKLFRRFRKMNARQSKCYEMEDVLKHHWLYTSKYLQKFMNAHNALKTSGFTMNPQASLGDPLGIEDSLESQDSMEF.

An interaction with importin alpha-1 region spans residues 1-288 (MAASFPPTLG…LAVDFPEHFV (288 aa)). A compositionally biased stretch (basic and acidic residues) spans 40 to 54 (KTPEEAQKEKKDSFE). The segment at 40–80 (KTPEEAQKEKKDSFEGKPSLEQSPAVLDKADGQKPVPTQPL) is disordered. A Glycyl lysine isopeptide (Lys-Gly) (interchain with G-Cter in ubiquitin) cross-link involves residue Lys-234. Zn(2+) is bound by residues Cys-269, His-273, Cys-293, Cys-296, His-298, Cys-308, His-310, Cys-313, Cys-316, Cys-328, Cys-331, Cys-358, Cys-363, His-375, and His-379. The RING-type zinc finger occupies 293–332 (CQICEHILADPVETNCKHVFCRVCILRCLKVMGSYCPSCR). Residues 354–383 (LMVKCPAKECNEEVSLEKYNHHISSHKESK) form an RAG1-type zinc finger. The segment at residues 392–459 (GGRPRQHLLS…QADELEAIMQ (68 aa)) is a DNA-binding region (NBD). Asp-603, Asp-711, and Glu-965 together coordinate a divalent metal cation.

The protein belongs to the RAG1 family. In terms of assembly, homodimer. Component of the RAG complex composed of core components RAG1 and RAG2, and associated component HMGB1 or HMGB2. Interacts with DCAF1, leading to recruitment of the CUL4A-RBX1-DDB1-DCAF1/VPRBP complex to ubiquitinate proteins and limit error-prone repair during V(D)J recombination. The cofactor is Mg(2+). Mn(2+) is required as a cofactor. Post-translationally, autoubiquitinated in the presence of CDC34/UBCH3. Maturing lymphoid cells.

The protein resides in the nucleus. The catalysed reaction is S-ubiquitinyl-[E2 ubiquitin-conjugating enzyme]-L-cysteine + [acceptor protein]-L-lysine = [E2 ubiquitin-conjugating enzyme]-L-cysteine + N(6)-ubiquitinyl-[acceptor protein]-L-lysine.. Functionally, catalytic component of the RAG complex, a multiprotein complex that mediates the DNA cleavage phase during V(D)J recombination. V(D)J recombination assembles a diverse repertoire of immunoglobulin and T-cell receptor genes in developing B and T-lymphocytes through rearrangement of different V (variable), in some cases D (diversity), and J (joining) gene segments. In the RAG complex, RAG1 mediates the DNA-binding to the conserved recombination signal sequences (RSS) and catalyzes the DNA cleavage activities by introducing a double-strand break between the RSS and the adjacent coding segment. RAG2 is not a catalytic component but is required for all known catalytic activities. DNA cleavage occurs in 2 steps: a first nick is introduced in the top strand immediately upstream of the heptamer, generating a 3'-hydroxyl group that can attack the phosphodiester bond on the opposite strand in a direct transesterification reaction, thereby creating 4 DNA ends: 2 hairpin coding ends and 2 blunt, 5'-phosphorylated ends. The chromatin structure plays an essential role in the V(D)J recombination reactions and the presence of histone H3 trimethylated at 'Lys-4' (H3K4me3) stimulates both the nicking and haipinning steps. The RAG complex also plays a role in pre-B cell allelic exclusion, a process leading to expression of a single immunoglobulin heavy chain allele to enforce clonality and monospecific recognition by the B-cell antigen receptor (BCR) expressed on individual B-lymphocytes. The introduction of DNA breaks by the RAG complex on one immunoglobulin allele induces ATM-dependent repositioning of the other allele to pericentromeric heterochromatin, preventing accessibility to the RAG complex and recombination of the second allele. In addition to its endonuclease activity, RAG1 also acts as an E3 ubiquitin-protein ligase that mediates monoubiquitination of histone H3. Histone H3 monoubiquitination is required for the joining step of V(D)J recombination. Mediates polyubiquitination of KPNA1. The chain is V(D)J recombination-activating protein 1 (RAG1) from Homo sapiens (Human).